Here is a 301-residue protein sequence, read N- to C-terminus: MFGWHWLLEWQTPYEFHGHLIEKVLAEEKTPYQHVTLVEFTRFGKGLIIDGKVQSTLYDEHIYHELLVHPLLLSLTKPPKSVLILGGGEGATLREVLKYKSVEKAVMVDIDEKVIEFAKKYLYEWHQGAFEDKRTNLVITDGLKFIKETKEKYDAIILDLTDPIKNSTSYMLYTKEFYEKLREILNERGGIVTQATSPSFSLEVYVTIYNTIKEVFKEASASYTYMASFDGLWGFVYGGVRPDLLSEDEVDSKINERIDGQLRFYDGYSHKISFSLPKNIKSEFQKITKISTEKDPIYVPA.

The PABS domain occupies 4-240 (WHWLLEWQTP…GLWGFVYGGV (237 aa)). Glutamine 33 provides a ligand contact to S-methyl-5'-thioadenosine. 2 residues coordinate spermidine: histidine 64 and glutamate 89. Residues aspartate 109 and 141-142 (DG) contribute to the S-methyl-5'-thioadenosine site. Aspartate 159 acts as the Proton acceptor in catalysis.

This sequence belongs to the spermidine/spermine synthase family. In terms of assembly, homotrimer.

The protein localises to the cytoplasm. The enzyme catalyses S-adenosyl 3-(methylsulfanyl)propylamine + putrescine = S-methyl-5'-thioadenosine + spermidine + H(+). It catalyses the reaction S-adenosyl 3-(methylsulfanyl)propylamine + propane-1,3-diamine = norspermidine + S-methyl-5'-thioadenosine + H(+). The catalysed reaction is norspermidine + S-adenosyl 3-(methylsulfanyl)propylamine = norspermine + S-methyl-5'-thioadenosine + H(+). It carries out the reaction S-adenosyl 3-(methylsulfanyl)propylamine + spermidine = thermospermine + S-methyl-5'-thioadenosine + H(+). It functions in the pathway amine and polyamine biosynthesis; spermidine biosynthesis; spermidine from putrescine: step 1/1. With respect to regulation, competitively inhibited by 5-methylthioadenosine, 5-methylthiotubercidin, S-adenosyl(5)-3-thiopropylamine and S-adenosyl-3-thio-l,8-diaminooctane. Its function is as follows. Involved in the biosynthesis of polyamines which are thought to support the growth of thermophilic microorganisms under high-temperature conditions. It seems that long-chain and branched-chain of polyamines effectively stabilize DNA and RNA, respectively. Catalyzes the irreversible transfer of a propylamine group from the amino donor S-adenosylmethioninamine (decarboxy-AdoMet) to various amine acceptors such as putrescine (1,4-diaminobutane), 1,3-diaminopropane, sym-norspermidine and spermidine. The biosynthesis of caldopentamine from norspermine has been also observed, but with a very low activity. The reaction involves a nucleophilic attack on the C-3 methylene of the propylamine moiety adjacent to the positively charged sulfur of decarboxy-AdoMet. S-adenosylmethioninamine is the only amino donor. This chain is Polyamine aminopropyltransferase, found in Saccharolobus solfataricus (strain ATCC 35092 / DSM 1617 / JCM 11322 / P2) (Sulfolobus solfataricus).